A 302-amino-acid chain; its full sequence is Cuticle collagen 40 (302 aa).

2 disordered regions span residues 79–103 (RIKRDTRSRRGGYAEGGAAAGGGGG) and 119–302 (AGAP…APGY). Over residues 91-103 (YAEGGAAAGGGGG) the composition is skewed to gly residues. Triple-helical region stretches follow at residues 114 to 143 (GAAGPAGAPGKDGAPGEDGKAGNPGTAGSD), 162 to 185 (GPAGPAGGPGPAGPPGPAGADGNT), 189 to 221 (GGEGPAGPPGPPGPAGNPGTDGAPGNPGAPGQV), 226 to 252 (GTPGPAGAAGPPGPPGPAGNPGSAGAS), and 255 to 290 (GPAGPAGDAGPDGAPGNAGAPGAPGEAGAPGSGGGC). Residues 137–154 (PGTAGSDAEAAAAPTASD) show a composition bias toward low complexity. Over residues 194–203 (AGPPGPPGPA) the composition is skewed to pro residues. Composition is skewed to low complexity over residues 205-234 (NPGTDGAPGNPGAPGQVTETPGTPGPAGAA) and 245-281 (NPGSAGASEPGPAGPAGDAGPDGAPGNAGAPGAPGEA). Over residues 293 to 302 (CPPPRTAPGY) the composition is skewed to pro residues.

The protein belongs to the cuticular collagen family. In terms of assembly, collagen polypeptide chains are complexed within the cuticle by disulfide bonds and other types of covalent cross-links.

In terms of biological role, nematode cuticles are composed largely of collagen-like proteins. The cuticle functions both as an exoskeleton and as a barrier to protect the worm from its environment. This Caenorhabditis elegans protein is Cuticle collagen 40 (col-40).